A 339-amino-acid polypeptide reads, in one-letter code: Ketol-acid reductoisomerase (NADP(+)) (339 aa).

A KARI N-terminal Rossmann domain is found at 1-182 (MRVYYDRDAD…GGGRSGIIET (182 aa)). NADP(+)-binding positions include 24–27 (YGSQ), Lys48, Ser51, Thr53, and 83–86 (DELQ). His108 is a catalytic residue. Gly134 is a binding site for NADP(+). In terms of domain architecture, KARI C-terminal knotted spans 183–328 (NFKEECETDL…AKLRGMMPWI (146 aa)). Asp191, Glu195, Glu227, and Glu231 together coordinate Mg(2+). Ser252 is a binding site for substrate.

Belongs to the ketol-acid reductoisomerase family. It depends on Mg(2+) as a cofactor.

The enzyme catalyses (2R)-2,3-dihydroxy-3-methylbutanoate + NADP(+) = (2S)-2-acetolactate + NADPH + H(+). It carries out the reaction (2R,3R)-2,3-dihydroxy-3-methylpentanoate + NADP(+) = (S)-2-ethyl-2-hydroxy-3-oxobutanoate + NADPH + H(+). Its pathway is amino-acid biosynthesis; L-isoleucine biosynthesis; L-isoleucine from 2-oxobutanoate: step 2/4. The protein operates within amino-acid biosynthesis; L-valine biosynthesis; L-valine from pyruvate: step 2/4. Functionally, involved in the biosynthesis of branched-chain amino acids (BCAA). Catalyzes an alkyl-migration followed by a ketol-acid reduction of (S)-2-acetolactate (S2AL) to yield (R)-2,3-dihydroxy-isovalerate. In the isomerase reaction, S2AL is rearranged via a Mg-dependent methyl migration to produce 3-hydroxy-3-methyl-2-ketobutyrate (HMKB). In the reductase reaction, this 2-ketoacid undergoes a metal-dependent reduction by NADPH to yield (R)-2,3-dihydroxy-isovalerate. This is Ketol-acid reductoisomerase (NADP(+)) from Sinorhizobium fredii (strain NBRC 101917 / NGR234).